The sequence spans 374 residues: Translocating chain-associated membrane protein 1 (374 aa).

Topologically, residues 1–32 (MAIRKKSNKNPPVLSHEFVLQNHADIVSCLAM) are cytoplasmic. The chain crosses the membrane as a helical span at residues 33 to 53 (LFLLGLMFEITAKGAIIFVAL). The Lumenal segment spans residues 54–81 (QYNVTRPATEEQAAESASLYYYGIKDLA). Asn56 carries N-linked (GlcNAc...) asparagine glycosylation. A helical membrane pass occupies residues 82 to 102 (TVFFYMLVAIIVHAIIQEYVL). The Cytoplasmic segment spans residues 103-121 (DKINRRMHFSKTKHSKFNE). The TLC domain occupies 117 to 326 (SKFNESGQLS…NFQLRRWREH (210 aa)). The chain crosses the membrane as a helical span at residues 122 to 142 (SGQLSAFYLFACVWGTFILVS). Over 143 to 159 (ENYISDPTILWRAYPHN) the chain is Lumenal. Residues 160 to 180 (LMTFQMKFFYISQLAYWLHAF) form a helical membrane-spanning segment. The Cytoplasmic segment spans residues 181 to 192 (PELYFQKTKKED). Residues 193–213 (IPRQLVYIGLYLFHIAGAYLL) traverse the membrane as a helical segment. Residue Asn214 is a topological domain, lumenal. A helical membrane pass occupies residues 215-235 (LNHLGLVLLVLHYFVEFLFHI). Residues 236-251 (SRLFYFSDEKYQKGFS) are Cytoplasmic-facing. Residues 252-272 (LWAVLFVLGRLLTLILSVLTV) traverse the membrane as a helical segment. Residues 273–297 (GFGLARAENQKLDFSTGNFNVLAVR) are Lumenal-facing. Residues 298-318 (IAVLASICITQAFMMWKFINF) traverse the membrane as a helical segment. Residues 319 to 374 (QLRRWREHSAFQAPPVKRKPAVTKGRSSRKGTENGVNGTVTSNGADSPRSRKEKSS) lie on the Cytoplasmic side of the membrane. Residues 333–374 (PVKRKPAVTKGRSSRKGTENGVNGTVTSNGADSPRSRKEKSS) are disordered. Residues 334 to 347 (VKRKPAVTKGRSSR) are compositionally biased toward basic residues. The segment covering 352-363 (NGVNGTVTSNGA) has biased composition (polar residues). Ser365 is subject to Phosphoserine.

The protein belongs to the TRAM family. In terms of assembly, interacts with SEC61B. May interact with Derlin-1/DERL1. In terms of processing, N-glycosylated.

It localises to the endoplasmic reticulum membrane. Functionally, involved in the translocation of nascent protein chains into or through the endoplasmic reticulum (ER) membrane by facilitating the proper chain positioning at the SEC61 channel. Regulates the exposure of nascent secretory protein chain to the cytosol during translocation into the ER. May affect the phospholipid bilayer in the vicinity of the lateral gate of the SEC61 channel, thereby facilitating ER protein transport. Intimately associates with transmembrane (TM) domain of nascent membrane proteins during the entire integration process into the ER membrane. Associates with the second TM domain of G-protein-coupled receptor opsin/OPSD nascent chain in the ER membrane, which may facilitate its integration into the membrane. Under conditions of ER stress, participates in the disposal of misfolded ER membrane proteins during the unfolded protein response (UPR), an integrated stress response (ISR) pathway, by selectively retrotranslocating misfolded ER-membrane proteins from the ER into the cytosol where they are ubiquitinated and degraded by the proteasome. This is Translocating chain-associated membrane protein 1 from Rattus norvegicus (Rat).